The following is a 397-amino-acid chain: Succinate--CoA ligase [ADP-forming] subunit beta (397 aa).

The ATP-grasp domain occupies 9 to 254 (KALLKGYGAP…ETEEDAKEIE (246 aa)). ATP is bound by residues K46, 53–55 (GRG), E109, A112, and E117. Mg(2+) is bound by residues N209 and D223. Substrate-binding positions include N274 and 331 to 333 (GIM).

Belongs to the succinate/malate CoA ligase beta subunit family. In terms of assembly, heterotetramer of two alpha and two beta subunits. Requires Mg(2+) as cofactor.

The enzyme catalyses succinate + ATP + CoA = succinyl-CoA + ADP + phosphate. It carries out the reaction GTP + succinate + CoA = succinyl-CoA + GDP + phosphate. It participates in carbohydrate metabolism; tricarboxylic acid cycle; succinate from succinyl-CoA (ligase route): step 1/1. Succinyl-CoA synthetase functions in the citric acid cycle (TCA), coupling the hydrolysis of succinyl-CoA to the synthesis of either ATP or GTP and thus represents the only step of substrate-level phosphorylation in the TCA. The beta subunit provides nucleotide specificity of the enzyme and binds the substrate succinate, while the binding sites for coenzyme A and phosphate are found in the alpha subunit. The sequence is that of Succinate--CoA ligase [ADP-forming] subunit beta from Rhizobium johnstonii (strain DSM 114642 / LMG 32736 / 3841) (Rhizobium leguminosarum bv. viciae).